Reading from the N-terminus, the 426-residue chain is Putative F-box/LRR-repeat protein At4g15060 (426 aa).

The region spanning Met-25–His-71 is the F-box domain. LRR repeat units lie at residues Ser-50–Tyr-75, Glu-80–Phe-106, Ile-160–Arg-187, Val-188–Arg-213, Thr-221–Asp-259, Glu-265–Ser-290, Cys-311–Pro-337, Cys-338–Leu-363, and Asp-373–Trp-399.

The polypeptide is Putative F-box/LRR-repeat protein At4g15060 (Arabidopsis thaliana (Mouse-ear cress)).